The sequence spans 273 residues: Zinc finger protein 32 (273 aa).

3 C2H2-type zinc fingers span residues 77–99 (YECQ…ERIH), 105–127 (FECT…QRIH), and 133–155 (YQCK…ERLH). 20 residues coordinate Zn(2+): Cys79, Cys82, His95, His99, Cys107, Cys110, His123, His127, Ser141, Gln144, Gly157, Tyr161, Phe198, Lys201, Leu214, Ala218, Cys247, Cys250, His263, and Cys267. 2 consecutive C2H2-type zinc fingers follow at residues 161 to 183 (YECA…RRVH) and 189 to 211 (YRCD…IRVH). A C2H2-type 6 zinc finger spans residues 217-239 (YACTQCRKSFHTRGNCILHGKIH). The CCHC-type zinc finger occupies 245-267 (YLCGQCGKSFTQRGSLAVHQRSC).

This sequence belongs to the krueppel C2H2-type zinc-finger protein family.

Its subcellular location is the nucleus. May be involved in transcriptional regulation. In Homo sapiens (Human), this protein is Zinc finger protein 32 (ZNF32).